The sequence spans 183 residues: Adenine phosphoribosyltransferase (183 aa).

Belongs to the purine/pyrimidine phosphoribosyltransferase family. In terms of assembly, homodimer.

The protein resides in the cytoplasm. The enzyme catalyses AMP + diphosphate = 5-phospho-alpha-D-ribose 1-diphosphate + adenine. Its pathway is purine metabolism; AMP biosynthesis via salvage pathway; AMP from adenine: step 1/1. In terms of biological role, catalyzes a salvage reaction resulting in the formation of AMP, that is energically less costly than de novo synthesis. In Cronobacter sakazakii (strain ATCC BAA-894) (Enterobacter sakazakii), this protein is Adenine phosphoribosyltransferase.